The chain runs to 506 residues: Histidine--tRNA ligase, mitochondrial (506 aa).

Residues 1-33 constitute a mitochondrion transit peptide; it reads MPLLGLLPRRAWASLLSQLLRPPCASCTGAVRC. S67 carries the phosphoserine modification. Residues 131-133, R158, Q174, D178, R327, and 331-332 contribute to the L-histidine site; these read DLT and YY. The residue at position 444 (K444) is an N6-acetyllysine.

This sequence belongs to the class-II aminoacyl-tRNA synthetase family. In terms of assembly, homodimer. A high level expression is seen in the heart, kidney and skeletal muscle while a lower level expression is seen in the brain and liver.

The protein resides in the mitochondrion. It catalyses the reaction tRNA(His) + L-histidine + ATP = L-histidyl-tRNA(His) + AMP + diphosphate + H(+). Functionally, mitochondrial aminoacyl-tRNA synthetase that catalyzes the ATP-dependent ligation of histidine to the 3'-end of its cognate tRNA, via the formation of an aminoacyl-adenylate intermediate (His-AMP). The chain is Histidine--tRNA ligase, mitochondrial (HARS2) from Homo sapiens (Human).